We begin with the raw amino-acid sequence, 182 residues long: Adenine phosphoribosyltransferase (182 aa).

Belongs to the purine/pyrimidine phosphoribosyltransferase family. Homodimer.

The protein resides in the cytoplasm. The catalysed reaction is AMP + diphosphate = 5-phospho-alpha-D-ribose 1-diphosphate + adenine. It functions in the pathway purine metabolism; AMP biosynthesis via salvage pathway; AMP from adenine: step 1/1. In terms of biological role, catalyzes a salvage reaction resulting in the formation of AMP, that is energically less costly than de novo synthesis. The chain is Adenine phosphoribosyltransferase from Pseudomonas fluorescens (strain SBW25).